Consider the following 401-residue polypeptide: 3-sulfinopropanoyl-CoA desulfinase (401 aa).

Residues 121–124 (ICIS), Ser-130, and 153–156 (YWIT) contribute to the FAD site. 243 to 244 (YN) contributes to the substrate binding site. FAD contacts are provided by residues Arg-272, Gln-339, Ser-343, 366 to 370 (GGTAQ), and Gln-387.

This sequence belongs to the acyl-CoA dehydrogenase family. As to quaternary structure, homotetramer. FAD serves as cofactor.

It catalyses the reaction 3-sulfinopropanoyl-CoA + H2O = propanoyl-CoA + sulfite + H(+). Functionally, catalyzes the conversion 3-sulfinopropanoyl-CoA (3SP-CoA) to propanoyl-CoA by abstraction of sulfite. Does not show dehydrogenase activity. Involved in the degradation of 3,3'-dithiodipropionate (DTDP), a sulfur-containing precursor substrate for biosynthesis of polythioesters (PTEs). This is 3-sulfinopropanoyl-CoA desulfinase from Advenella mimigardefordensis (strain DSM 17166 / LMG 22922 / DPN7).